The sequence spans 1196 residues: RNA-dependent RNA polymerase 6 (1196 aa).

This sequence belongs to the RdRP family. As to quaternary structure, interacts with SGS3. As to expression, widely expressed.

The protein localises to the cytoplasmic granule. It localises to the nucleus. It carries out the reaction RNA(n) + a ribonucleoside 5'-triphosphate = RNA(n+1) + diphosphate. RNA-dependent RNA polymerase involved in post-transcriptional gene silencing (PTGS). Possesses ssRNA and ssDNA-dependent polymerase activity, but does not have priming activity. Possesses in vitro 3' nucleotidyltransferase activity in the presence of UTP as single nucleotide. Required for the production of 21 nucleotide trans-acting small interfering RNAs (ta-siRNAs) derived from TAS1, TAS2 and TAS3 endogenous transcripts. Acts in the RDR6/SGS3/DCL4/AGO7 ta-siRNA pathway involved in leaf developmental timing. Required for the production of natural siRNAs (nat-siRNAs) derived from cis-natural antisense transcripts. Required for the production of 24 nucleotide nat-siRNAs derived from the stress-related P5CDH-SRO5 antisense gene pair. Required for PTGS induced by transgene direct repeats. Plays an essential role in transitive silencing of transgenes by processing secondary siRNAs. This pathway, which requires DCL2 and DCL4, amplifies silencing by using the target RNA as substrate to generate secondary siRNAs, providing an efficient mechanism for long-distance silencing. Involved in the biogenesis of secondary siRNAs which require 22 nucleotide miRNAs associated to AGO1. Participates synergistically with AS1 and AS2 to proper plant development by repressing the miR165 and miR166 microRNAs (independently of AGO10) that may lead to mRNA degradation of genes in the class III HD-ZIP family. Required for the production of some small RNAs derived from the crucifer-infecting tobamovirus (TMV-cg). Required for sense virus-induced post-transcriptional gene silencing (S-PTGS). This Arabidopsis thaliana (Mouse-ear cress) protein is RNA-dependent RNA polymerase 6 (RDR6).